Consider the following 225-residue polypeptide: Orotate phosphoribosyltransferase (225 aa).

A 5-phospho-alpha-D-ribose 1-diphosphate-binding site is contributed by Lys32. 40–41 (FF) serves as a coordination point for orotate. Residues 78–79 (YK), Arg104, Lys105, Lys108, His110, and 129–137 (DDVISAGTS) contribute to the 5-phospho-alpha-D-ribose 1-diphosphate site. Orotate is bound by residues Ser133 and Arg161.

The protein belongs to the purine/pyrimidine phosphoribosyltransferase family. PyrE subfamily. In terms of assembly, homodimer. Mg(2+) is required as a cofactor.

It catalyses the reaction orotidine 5'-phosphate + diphosphate = orotate + 5-phospho-alpha-D-ribose 1-diphosphate. The protein operates within pyrimidine metabolism; UMP biosynthesis via de novo pathway; UMP from orotate: step 1/2. Catalyzes the transfer of a ribosyl phosphate group from 5-phosphoribose 1-diphosphate to orotate, leading to the formation of orotidine monophosphate (OMP). This Cupriavidus metallidurans (strain ATCC 43123 / DSM 2839 / NBRC 102507 / CH34) (Ralstonia metallidurans) protein is Orotate phosphoribosyltransferase.